A 150-amino-acid polypeptide reads, in one-letter code: Arginine repressor (150 aa).

The protein belongs to the ArgR family.

It localises to the cytoplasm. It participates in amino-acid biosynthesis; L-arginine biosynthesis [regulation]. Regulates arginine biosynthesis genes. This Staphylococcus epidermidis (strain ATCC 35984 / DSM 28319 / BCRC 17069 / CCUG 31568 / BM 3577 / RP62A) protein is Arginine repressor.